We begin with the raw amino-acid sequence, 462 residues long: tRNA(Ile2) 2-agmatinylcytidine synthetase TiaS (462 aa).

The protein belongs to the TiaS family.

The protein resides in the cytoplasm. It catalyses the reaction cytidine(34) in tRNA(Ile2) + agmatine + ATP + H2O = 2-agmatinylcytidine(34) in tRNA(Ile2) + AMP + 2 phosphate + 2 H(+). In terms of biological role, ATP-dependent agmatine transferase that catalyzes the formation of 2-agmatinylcytidine (agm2C) at the wobble position (C34) of tRNA(Ile2), converting the codon specificity from AUG to AUA. This chain is tRNA(Ile2) 2-agmatinylcytidine synthetase TiaS, found in Haloquadratum walsbyi (strain DSM 16790 / HBSQ001).